The following is a 402-amino-acid chain: Oxysterol-binding protein 12 (402 aa).

Residues 333–366 (NNNNDKETAEEKAKIEEKQRKEESERREKGILWE) form a disordered region. Residues 336-366 (NDKETAEEKAKIEEKQRKEESERREKGILWE) are compositionally biased toward basic and acidic residues.

Belongs to the OSBP family.

This Dictyostelium discoideum (Social amoeba) protein is Oxysterol-binding protein 12 (osbL).